Here is a 317-residue protein sequence, read N- to C-terminus: Probable deoxyhypusine synthase 1 (317 aa).

The active-site Nucleophile is the K285.

The protein belongs to the deoxyhypusine synthase family. The cofactor is NAD(+).

It catalyses the reaction [eIF5A protein]-L-lysine + spermidine = [eIF5A protein]-deoxyhypusine + propane-1,3-diamine. It participates in protein modification; eIF5A hypusination. Its function is as follows. Catalyzes the NAD-dependent oxidative cleavage of spermidine and the subsequent transfer of the butylamine moiety of spermidine to the epsilon-amino group of a specific lysine residue of the eIF-5A precursor protein to form the intermediate deoxyhypusine residue. This is Probable deoxyhypusine synthase 1 (dys1) from Methanosarcina mazei (strain ATCC BAA-159 / DSM 3647 / Goe1 / Go1 / JCM 11833 / OCM 88) (Methanosarcina frisia).